Consider the following 504-residue polypeptide: Sugar transport protein 14 (504 aa).

The Cytoplasmic segment spans residues 1 to 25; sequence MAGGALTDEGGLKRAHLYEHRITSY. Transmembrane regions (helical) follow at residues 26–46, 84–104, 121–141, 144–164, 171–191, 205–225, 286–308, 315–337, 352–372, 382–402, 428–448, and 454–474; these read FIFACIVGSMGGSLFGYDLGV, ILTLFTSSLYFAGLISTFGAS, VSFFLGGVINAAAKNILMLIL, IFLGIGIGFGNQAVPLYLSEM, GTVNQLFQLTTCIGILVANLI, LSLGLATVPAILMFLGGLVLP, LVIGAIGLPAFQQLTGMNSILFY, SLGFGGSASLISSTITNAALVVA, FLLLEASVEMFCYMVVVGVTL, LPKSLGLILVVLICLFVLAYG, VVVCVNLFFTALIAQCFLVSL, and GIFLLFAGLILGMGSFVYFLL. Residues 475-504 are Cytoplasmic-facing; it reads PETKQVPIEEVYLLWRQHWLWKKYVEDVDE.

Belongs to the major facilitator superfamily. Sugar transporter (TC 2.A.1.1) family.

The protein localises to the membrane. Its function is as follows. Mediates an active uptake of hexoses, probably by sugar/hydrogen symport. The sequence is that of Sugar transport protein 14 (STP14) from Arabidopsis thaliana (Mouse-ear cress).